The sequence spans 78 residues: Acyl carrier protein (78 aa).

In terms of domain architecture, Carrier spans serine 2–glutamine 77. An O-(pantetheine 4'-phosphoryl)serine modification is found at serine 37.

The protein belongs to the acyl carrier protein (ACP) family. Post-translationally, 4'-phosphopantetheine is transferred from CoA to a specific serine of apo-ACP by AcpS. This modification is essential for activity because fatty acids are bound in thioester linkage to the sulfhydryl of the prosthetic group.

It is found in the cytoplasm. It functions in the pathway lipid metabolism; fatty acid biosynthesis. In terms of biological role, carrier of the growing fatty acid chain in fatty acid biosynthesis. In Comamonas testosteroni (Pseudomonas testosteroni), this protein is Acyl carrier protein.